We begin with the raw amino-acid sequence, 288 residues long: Polyamine aminopropyltransferase (288 aa).

The 230-residue stretch at 9-238 (ETLHDQFGQY…GIMTFAWATD (230 aa)) folds into the PABS domain. An S-methyl-5'-thioadenosine-binding site is contributed by Gln33. Spermidine is bound by residues His64 and Asp88. S-methyl-5'-thioadenosine is bound by residues Glu108 and 140–141 (DG). Catalysis depends on Asp158, which acts as the Proton acceptor. Residue 158 to 161 (DCTD) coordinates spermidine. Residue Pro165 participates in S-methyl-5'-thioadenosine binding.

This sequence belongs to the spermidine/spermine synthase family. Homodimer or homotetramer.

The protein resides in the cytoplasm. It catalyses the reaction S-adenosyl 3-(methylsulfanyl)propylamine + putrescine = S-methyl-5'-thioadenosine + spermidine + H(+). It functions in the pathway amine and polyamine biosynthesis; spermidine biosynthesis; spermidine from putrescine: step 1/1. Catalyzes the irreversible transfer of a propylamine group from the amino donor S-adenosylmethioninamine (decarboxy-AdoMet) to putrescine (1,4-diaminobutane) to yield spermidine. The chain is Polyamine aminopropyltransferase from Escherichia coli (strain UTI89 / UPEC).